A 415-amino-acid chain; its full sequence is D-galactonate dehydratase family member RspA (415 aa).

Positions 48 and 133 each coordinate substrate. Catalysis depends on Tyr-170, which acts as the Proton donor/acceptor. Asp-223 is a binding site for Mg(2+). Catalysis depends on His-225, which acts as the Proton donor/acceptor. Residues Glu-249, Asp-250, and Glu-275 each coordinate Mg(2+). Substrate-binding residues include Glu-275, Arg-296, His-325, Asp-329, and Glu-352.

This sequence belongs to the mandelate racemase/muconate lactonizing enzyme family. GalD subfamily. Mg(2+) serves as cofactor.

It catalyses the reaction D-mannonate = 2-dehydro-3-deoxy-D-gluconate + H2O. Functionally, has low D-mannonate dehydratase activity (in vitro), suggesting that this is not a physiological substrate and that it has no significant role in D-mannonate degradation in vivo. Has no detectable activity with a panel of 70 other acid sugars (in vitro). This chain is D-galactonate dehydratase family member RspA (rspA), found in Escherichia coli O6:H1 (strain CFT073 / ATCC 700928 / UPEC).